Reading from the N-terminus, the 244-residue chain is Ras-related protein Rab-12 (244 aa).

At M1 the chain carries N-acetylmethionine. Residues 1-10 (MDPGAALQRR) are compositionally biased toward low complexity. The interval 1 to 37 (MDPGAALQRRAGGGGGLGAGSPALSGGQGRRRKQPPR) is disordered. S21 and S25 each carry phosphoserine. GDP is bound at residue G52. Residues G52, V53, G54, K55, and T56 each coordinate GTP. GDP contacts are provided by G54, K55, T56, and S57. T56 contacts Mg(2+). 2 short sequence motifs (switch) span residues 65–79 (DTFC…GVDF) and 97–114 (DTAG…YYRS). Residues S73 and T74 each contribute to the GTP site. T74 and D97 together coordinate Mg(2+). GTP is bound at residue G100. At S106 the chain carries Phosphoserine; by LRRK2. Residues N155, K156, D158, and C159 each coordinate GDP. Residues N155, K156, and D158 each coordinate GTP. Residues S186, A187, and K188 each contribute to the GTP site. GDP-binding residues include A187 and K188. The tract at residues 225–244 (QPEPEIPPELPPPRPHVRCC) is disordered. The segment covering 228–238 (PEIPPELPPPR) has biased composition (pro residues). S-geranylgeranyl cysteine attachment occurs at residues C243 and C244.

Belongs to the small GTPase superfamily. Rab family. Interacts with RABIF. Interacts with OPTN. Interacts with LRRK2; interaction facilitates phosphorylation of Ser-106. Interacts with GDI1, GDI2, CHM and CHML; these interactions are disrupted by phosphorylation on Ser-106. Interacts with RILPL1 and RILPL2; these interactions are dependent on phosphorylation of Ser-106. The cofactor is Mg(2+). In terms of processing, phosphorylation of Ser-106 in the switch II region by LRRK2 prevents the association of RAB regulatory proteins, including CHM, CHML and RAB GDP dissociation inhibitors GDI1 and GDI2.

The protein resides in the recycling endosome membrane. The protein localises to the lysosome membrane. Its subcellular location is the golgi apparatus membrane. It localises to the cytoplasmic vesicle. It is found in the autophagosome. It carries out the reaction GTP + H2O = GDP + phosphate + H(+). Regulated by guanine nucleotide exchange factors (GEFs) including DENND3 which promote the exchange of bound GDP for free GTP. Regulated by GTPase activating proteins (GAPs) which increase the GTP hydrolysis activity. Inhibited by GDP dissociation inhibitors (GDIs). Its function is as follows. The small GTPases Rab are key regulators of intracellular membrane trafficking, from the formation of transport vesicles to their fusion with membranes. Rabs cycle between an inactive GDP-bound form and an active GTP-bound form that is able to recruit to membranes different sets of downstream effectors directly responsible for vesicle formation, movement, tethering and fusion. RAB12 may play a role in protein transport from recycling endosomes to lysosomes regulating, for instance, the degradation of the transferrin receptor. Involved in autophagy. In Homo sapiens (Human), this protein is Ras-related protein Rab-12.